The chain runs to 309 residues: NADH-cytochrome b5 reductase 1 (309 aa).

The chain crosses the membrane as a helical span at residues Phe30–Gly50. Positions Thr60–Thr165 constitute an FAD-binding FR-type domain. FAD contacts are provided by residues Thr145–Gly160 and His171–Leu208.

The protein belongs to the flavoprotein pyridine nucleotide cytochrome reductase family. In terms of assembly, monomer. Component of the 2-(3-amino-3-carboxypropyl)histidine synthase complex composed of dph1, dph2, dph3 and a NADH-dependent reductase, predominantly cbr1. The cofactor is FAD.

The protein resides in the mitochondrion outer membrane. The catalysed reaction is 2 Fe(III)-[cytochrome b5] + NADH = 2 Fe(II)-[cytochrome b5] + NAD(+) + H(+). It catalyses the reaction 2 Fe(3+)-[Dph3] + NADH = 2 Fe(2+)-[Dph3] + NAD(+) + H(+). Its pathway is protein modification; peptidyl-diphthamide biosynthesis. In terms of biological role, NADH-dependent reductase for dph3 and cytochrome b5. Required for the first step of diphthamide biosynthesis, a post-translational modification of histidine which occurs in elongation factor 2. Dph1 and dph2 transfer a 3-amino-3-carboxypropyl (ACP) group from S-adenosyl-L-methionine (SAM) to a histidine residue, the reaction is assisted by a reduction system comprising dph3 and a NADH-dependent reductase, predominantly cbr1. By reducing dph3, also involved in the formation of the tRNA wobble base modification mcm5s 2U (5-methoxycarbonylmethyl-2-thiouridine), mediated by the elongator complex. The cytochrome b5/NADH cytochrome b5 reductase electron transfer system supports the catalytic activity of several sterol biosynthetic enzymes. This Aspergillus fumigatus (strain ATCC MYA-4609 / CBS 101355 / FGSC A1100 / Af293) (Neosartorya fumigata) protein is NADH-cytochrome b5 reductase 1 (cbr1).